We begin with the raw amino-acid sequence, 199 residues long: Guanylate kinase (199 aa).

The Guanylate kinase-like domain occupies 20–198 (GKLIVLTGPS…ALQAIEVALF (179 aa)). Residue 27–34 (GPSGVGKG) coordinates ATP.

This sequence belongs to the guanylate kinase family.

The protein resides in the cytoplasm. The enzyme catalyses GMP + ATP = GDP + ADP. Essential for recycling GMP and indirectly, cGMP. The sequence is that of Guanylate kinase from Trichormus variabilis (strain ATCC 29413 / PCC 7937) (Anabaena variabilis).